Consider the following 129-residue polypeptide: Ribulose bisphosphate carboxylase small subunit (129 aa).

Belongs to the RuBisCO small chain family. As to quaternary structure, heterohexadecamer of 8 large and 8 small subunits.

Its function is as follows. RuBisCO catalyzes two reactions: the carboxylation of D-ribulose 1,5-bisphosphate, the primary event in carbon dioxide fixation, as well as the oxidative fragmentation of the pentose substrate. Both reactions occur simultaneously and in competition at the same active site. Although the small subunit is not catalytic it is essential for maximal activity. The chain is Ribulose bisphosphate carboxylase small subunit from Cereibacter sphaeroides (Rhodobacter sphaeroides).